Consider the following 205-residue polypeptide: Imidazole glycerol phosphate synthase subunit HisH (205 aa).

In terms of domain architecture, Glutamine amidotransferase type-1 spans 1–205; that stretch reads MIALVDYGGG…FFKMALGDKK (205 aa). Cysteine 79 (nucleophile) is an active-site residue. Catalysis depends on residues histidine 181 and glutamate 183.

As to quaternary structure, heterodimer of HisH and HisF.

It localises to the cytoplasm. The catalysed reaction is 5-[(5-phospho-1-deoxy-D-ribulos-1-ylimino)methylamino]-1-(5-phospho-beta-D-ribosyl)imidazole-4-carboxamide + L-glutamine = D-erythro-1-(imidazol-4-yl)glycerol 3-phosphate + 5-amino-1-(5-phospho-beta-D-ribosyl)imidazole-4-carboxamide + L-glutamate + H(+). It catalyses the reaction L-glutamine + H2O = L-glutamate + NH4(+). It participates in amino-acid biosynthesis; L-histidine biosynthesis; L-histidine from 5-phospho-alpha-D-ribose 1-diphosphate: step 5/9. Functionally, IGPS catalyzes the conversion of PRFAR and glutamine to IGP, AICAR and glutamate. The HisH subunit catalyzes the hydrolysis of glutamine to glutamate and ammonia as part of the synthesis of IGP and AICAR. The resulting ammonia molecule is channeled to the active site of HisF. The chain is Imidazole glycerol phosphate synthase subunit HisH from Dehalococcoides mccartyi (strain CBDB1).